The following is a 282-amino-acid chain: Probable endonuclease 4 (282 aa).

Residues His69, His109, Glu145, Asp179, His182, His216, Asp229, His231, and Glu261 each coordinate Zn(2+).

Belongs to the AP endonuclease 2 family. The cofactor is Zn(2+).

The enzyme catalyses Endonucleolytic cleavage to 5'-phosphooligonucleotide end-products.. Endonuclease IV plays a role in DNA repair. It cleaves phosphodiester bonds at apurinic or apyrimidinic (AP) sites, generating a 3'-hydroxyl group and a 5'-terminal sugar phosphate. The chain is Probable endonuclease 4 from Edwardsiella ictaluri (strain 93-146).